The following is a 592-amino-acid chain: Putative phosphatidylinositol 4-kinase alpha-like protein P2 (592 aa).

The pleckstrin homology (PH) domain conferring phosphoinositide binding specificity stretch occupies residues 180–318; that stretch reads EQLVEENTGS…ISWQAAIFKL (139 aa). The PI3K/PI4K catalytic domain maps to 275-576; the sequence is KVKRCGVSEL…VIQSCFLSNR (302 aa). Residues 281-287 are G-loop; sequence VSELEKE. A catalytic loop region spans residues 441–449; the sequence is QIKDRHNGN. An activation loop region spans residues 460–484; the sequence is HIDFGFMFESSPGGNLGWEPDIKLT.

Belongs to the PI3/PI4-kinase family. Type III PI4K subfamily.

This chain is Putative phosphatidylinositol 4-kinase alpha-like protein P2 (PI4KAP2), found in Homo sapiens (Human).